Reading from the N-terminus, the 348-residue chain is Dihydroorotase (348 aa).

Histidine 17 and histidine 19 together coordinate Zn(2+). Residues 19 to 21 and asparagine 45 contribute to the substrate site; that span reads HLR. Residues lysine 103, histidine 140, and histidine 178 each contribute to the Zn(2+) site. Lysine 103 is subject to N6-carboxylysine. Histidine 140 lines the substrate pocket. Leucine 223 provides a ligand contact to substrate. Zn(2+) is bound at residue aspartate 251. Residue aspartate 251 is part of the active site. Residues histidine 255 and alanine 267 each contribute to the substrate site.

The protein belongs to the metallo-dependent hydrolases superfamily. DHOase family. Class II DHOase subfamily. Homodimer. Requires Zn(2+) as cofactor.

It carries out the reaction (S)-dihydroorotate + H2O = N-carbamoyl-L-aspartate + H(+). It participates in pyrimidine metabolism; UMP biosynthesis via de novo pathway; (S)-dihydroorotate from bicarbonate: step 3/3. Catalyzes the reversible cyclization of carbamoyl aspartate to dihydroorotate. In Yersinia pestis, this protein is Dihydroorotase.